We begin with the raw amino-acid sequence, 217 residues long: Ribosomal RNA large subunit methyltransferase E (217 aa).

The S-adenosyl-L-methionine site is built by G71, W73, D91, D107, and D132. K172 serves as the catalytic Proton acceptor.

It belongs to the class I-like SAM-binding methyltransferase superfamily. RNA methyltransferase RlmE family.

The protein localises to the cytoplasm. It catalyses the reaction uridine(2552) in 23S rRNA + S-adenosyl-L-methionine = 2'-O-methyluridine(2552) in 23S rRNA + S-adenosyl-L-homocysteine + H(+). Its function is as follows. Specifically methylates the uridine in position 2552 of 23S rRNA at the 2'-O position of the ribose in the fully assembled 50S ribosomal subunit. This Psychromonas ingrahamii (strain DSM 17664 / CCUG 51855 / 37) protein is Ribosomal RNA large subunit methyltransferase E.